The sequence spans 1375 residues: DNA-directed RNA polymerase subunit beta (1375 aa).

The protein belongs to the RNA polymerase beta chain family. As to quaternary structure, the RNAP catalytic core consists of 2 alpha, 1 beta, 1 beta' and 1 omega subunit. When a sigma factor is associated with the core the holoenzyme is formed, which can initiate transcription.

It carries out the reaction RNA(n) + a ribonucleoside 5'-triphosphate = RNA(n+1) + diphosphate. In terms of biological role, DNA-dependent RNA polymerase catalyzes the transcription of DNA into RNA using the four ribonucleoside triphosphates as substrates. The protein is DNA-directed RNA polymerase subunit beta of Coxiella burnetii (strain RSA 331 / Henzerling II).